A 400-amino-acid polypeptide reads, in one-letter code: Argininosuccinate synthase (400 aa).

9 to 17 (AYSGGLDTS) is a binding site for ATP. Residue Y87 participates in L-citrulline binding. Position 117 (G117) interacts with ATP. T119, N123, and D124 together coordinate L-aspartate. N123 lines the L-citrulline pocket. L-citrulline is bound by residues R127, S176, S185, E261, and Y273.

It belongs to the argininosuccinate synthase family. Type 1 subfamily. Homotetramer.

It localises to the cytoplasm. It carries out the reaction L-citrulline + L-aspartate + ATP = 2-(N(omega)-L-arginino)succinate + AMP + diphosphate + H(+). The protein operates within amino-acid biosynthesis; L-arginine biosynthesis; L-arginine from L-ornithine and carbamoyl phosphate: step 2/3. The protein is Argininosuccinate synthase of Chlorobium phaeobacteroides (strain DSM 266 / SMG 266 / 2430).